Reading from the N-terminus, the 393-residue chain is Cysteine protease ATG4B (393 aa).

C73 serves as the catalytic Nucleophile. Residues D278 and H280 contribute to the active site. Residues 388 to 391 (FEIL) carry the LIR motif.

It belongs to the peptidase C54 family.

The protein resides in the cytoplasm. The protein localises to the cytosol. Its subcellular location is the cytoplasmic vesicle. It is found in the autophagosome. It localises to the endoplasmic reticulum. The protein resides in the mitochondrion. It carries out the reaction [protein]-C-terminal L-amino acid-glycyl-phosphatidylethanolamide + H2O = [protein]-C-terminal L-amino acid-glycine + a 1,2-diacyl-sn-glycero-3-phosphoethanolamine. The catalysed reaction is [protein]-C-terminal L-amino acid-glycyl-phosphatidylserine + H2O = [protein]-C-terminal L-amino acid-glycine + a 1,2-diacyl-sn-glycero-3-phospho-L-serine. Its function is as follows. Cysteine protease that plays a key role in autophagy by mediating both proteolytic activation and delipidation of ATG8 family proteins. Required for canonical autophagy (macroautophagy), non-canonical autophagy as well as for mitophagy. The protease activity is required for proteolytic activation of ATG8 family proteins: cleaves the C-terminal amino acid of ATG8 proteins to reveal a C-terminal glycine. Exposure of the glycine at the C-terminus is essential for ATG8 proteins conjugation to phosphatidylethanolamine (PE) and insertion to membranes, which is necessary for autophagy. Protease activity is also required to counteract formation of high-molecular weight conjugates of ATG8 proteins (ATG8ylation): acts as a deubiquitinating-like enzyme that removes ATG8 conjugated to other proteins, such as ATG3. In addition to the protease activity, also mediates delipidation of ATG8 family proteins. Catalyzes delipidation of PE-conjugated forms of ATG8 proteins during macroautophagy. Also involved in non-canonical autophagy, a parallel pathway involving conjugation of ATG8 proteins to single membranes at endolysosomal compartments, by catalyzing delipidation of ATG8 proteins conjugated to phosphatidylserine (PS). The polypeptide is Cysteine protease ATG4B (Gallus gallus (Chicken)).